The sequence spans 394 residues: Elongation factor Tu (394 aa).

The tr-type G domain occupies 10 to 205 (KPHMNVGTIG…TMDNYFDLPQ (196 aa)). The segment at 19–26 (GHVDHGKT) is G1. 19-26 (GHVDHGKT) is a GTP binding site. Residue Thr26 coordinates Mg(2+). The interval 61–65 (GITIN) is G2. The G3 stretch occupies residues 82–85 (DCPG). GTP contacts are provided by residues 82 to 86 (DCPGH) and 137 to 140 (NKLD). The G4 stretch occupies residues 137–140 (NKLD). A G5 region spans residues 173–175 (SAF).

The protein belongs to the TRAFAC class translation factor GTPase superfamily. Classic translation factor GTPase family. EF-Tu/EF-1A subfamily. In terms of assembly, monomer.

Its subcellular location is the cytoplasm. It catalyses the reaction GTP + H2O = GDP + phosphate + H(+). GTP hydrolase that promotes the GTP-dependent binding of aminoacyl-tRNA to the A-site of ribosomes during protein biosynthesis. This is Elongation factor Tu from Borrelia turicatae (strain 91E135).